Here is a 716-residue protein sequence, read N- to C-terminus: Eosinophil peroxidase (716 aa).

The first 18 residues, 1–18, serve as a signal peptide directing secretion; that stretch reads MMQQLLALVGALATLILT. Residues 19–140 constitute a propeptide that is removed on maturation; sequence QHAEGTAPAS…SGCALQDQAE (122 aa). N-linked (GlcNAc...) asparagine glycans are attached at residues asparagine 53 and asparagine 114. A disulfide bridge links cysteine 142 with cysteine 153. Aspartate 233 serves as a coordination point for heme b. Histidine 234 acts as the Proton acceptor in catalysis. A Ca(2+)-binding site is contributed by aspartate 235. Cystine bridges form between cysteine 254-cysteine 264 and cysteine 258-cysteine 282. Ca(2+) contacts are provided by threonine 307, phenylalanine 309, aspartate 311, and serine 313. Asparagine 328 and asparagine 364 each carry an N-linked (GlcNAc...) asparagine glycan. The cysteines at positions 360 and 371 are disulfide-linked. The heme b site is built by glutamate 381 and histidine 475. Tyrosine 489 carries the 3'-nitrotyrosine modification. Intrachain disulfides connect cysteine 579–cysteine 636 and cysteine 677–cysteine 702. Asparagine 709 carries an N-linked (GlcNAc...) asparagine glycan.

This sequence belongs to the peroxidase family. XPO subfamily. As to quaternary structure, tetramer of two light chains and two heavy chains. The cofactor is Ca(2+). Heme b serves as cofactor.

It localises to the cytoplasmic granule. The catalysed reaction is 2 a phenolic donor + H2O2 = 2 a phenolic radical donor + 2 H2O. Mediates tyrosine nitration of secondary granule proteins in mature resting eosinophils. In Mus musculus (Mouse), this protein is Eosinophil peroxidase (Epx).